The following is a 342-amino-acid chain: Trans-3-hydroxy-L-proline dehydratase (342 aa).

The active-site Proton acceptor is Ser90. Substrate-binding positions include 91-92 (GS), Asp251, and 256-257 (GT).

The protein belongs to the proline racemase family.

The catalysed reaction is trans-3-hydroxy-L-proline = 1-pyrroline-2-carboxylate + H2O. In terms of biological role, catalyzes the dehydration of trans-3-hydroxy-L-proline (t3LHyp) to Delta(1)-pyrroline-2-carboxylate (Pyr2C). Displays neither proline racemase activity nor 4-hydroxyproline 2-epimerase activity. This Brucella suis biovar 1 (strain 1330) protein is Trans-3-hydroxy-L-proline dehydratase.